Here is a 359-residue protein sequence, read N- to C-terminus: Stearoyl-CoA desaturase (359 aa).

Topologically, residues 1–72 (MPAHLLQEEI…EGPKPKLEYV (72 aa)) are cytoplasmic. A helical membrane pass occupies residues 73 to 93 (WRNIILMGLLHLGALYGITLI). Asn75 is a substrate binding site. Topologically, residues 94 to 97 (PTCK) are lumenal. Residues 98–118 (IYTFLWVLFYYMMSALGITAG) traverse the membrane as a helical segment. The Cytoplasmic portion of the chain corresponds to 119 to 217 (VHRLWSHRTY…EKLVMFQRRY (99 aa)). His120 and His125 together coordinate Fe cation. Residues 120–125 (HRLWSH) carry the Histidine box-1 motif. Substrate is bound by residues Asn148, Arg155, and Asp156. Residues His157, His160, and His161 each coordinate Fe cation. The Histidine box-2 motif lies at 157-161 (HRAHH). Substrate contacts are provided by Arg188 and Lys189. At Ser203 the chain carries Phosphoserine. A helical membrane pass occupies residues 218-237 (YKPGVLLLCFILPTLVPWYL). The Lumenal portion of the chain corresponds to 238 to 241 (WGET). The helical transmembrane segment at 242 to 263 (FQNSLFFATLLRYAVVLNATWL) threads the bilayer. Trp262 is a binding site for substrate. The Cytoplasmic segment spans residues 264–359 (VNSAAHMYGY…RTGEESCKSG (96 aa)). Residues His269, His298, His301, and His302 each coordinate Fe cation. Residues 298 to 302 (HNYHH) carry the Histidine box-3 motif.

Belongs to the fatty acid desaturase type 1 family. It depends on Fe(2+) as a cofactor.

The protein resides in the endoplasmic reticulum membrane. The catalysed reaction is octadecanoyl-CoA + 2 Fe(II)-[cytochrome b5] + O2 + 2 H(+) = (9Z)-octadecenoyl-CoA + 2 Fe(III)-[cytochrome b5] + 2 H2O. It carries out the reaction hexadecanoyl-CoA + 2 Fe(II)-[cytochrome b5] + O2 + 2 H(+) = (9Z)-hexadecenoyl-CoA + 2 Fe(III)-[cytochrome b5] + 2 H2O. In terms of biological role, stearoyl-CoA desaturase that utilizes O(2) and electrons from reduced cytochrome b5 to introduce the first double bond into saturated fatty acyl-CoA substrates. Catalyzes the insertion of a cis double bond at the delta-9 position into fatty acyl-CoA substrates including palmitoyl-CoA and stearoyl-CoA. Gives rise to a mixture of 16:1 and 18:1 unsaturated fatty acids. Plays an important role in lipid biosynthesis. Plays an important role in regulating the expression of genes that are involved in lipogenesis and in regulating mitochondrial fatty acid oxidation. Plays an important role in body energy homeostasis. Contributes to the biosynthesis of membrane phospholipids, cholesterol esters and triglycerides. The protein is Stearoyl-CoA desaturase (SCD) of Capra hircus (Goat).